Consider the following 282-residue polypeptide: Large ribosomal subunit protein uL4c (282 aa).

The transit peptide at Met1–Ser49 directs the protein to the chloroplast. Residues Glu106–Val138 form a disordered region.

Belongs to the universal ribosomal protein uL4 family. As to quaternary structure, part of the 50S ribosomal subunit.

It localises to the plastid. It is found in the chloroplast. In terms of biological role, this protein binds directly and specifically to 23S rRNA. May play a role in plastid transcriptional regulation. The chain is Large ribosomal subunit protein uL4c (RPL4) from Arabidopsis thaliana (Mouse-ear cress).